The following is a 48-amino-acid chain: MTPQIIPFFFMHQFTYGFLVILLTLLLLSYAFLSMILRLYLSRIYLSK.

Residues 17 to 37 (GFLVILLTLLLLSYAFLSMIL) form a helical membrane-spanning segment.

It belongs to the ATPase protein 8 family.

It localises to the membrane. This chain is Putative ATP synthase protein 8-like protein, found in Eremothecium gossypii (strain ATCC 10895 / CBS 109.51 / FGSC 9923 / NRRL Y-1056) (Yeast).